Reading from the N-terminus, the 572-residue chain is FAD-linked oxidoreductase patO (572 aa).

Positions 1 to 23 (MRLSIYSSILLLRAMCLVRPTFG) are cleaved as a signal peptide. Asn48, Asn71, Asn126, Asn180, Asn309, Asn354, Asn381, Asn422, Asn446, and Asn481 each carry an N-linked (GlcNAc...) asparagine glycan. An FAD-binding PCMH-type domain is found at 115–295 (CAPGDMVVYS…YSMTVKAFPD (181 aa)).

The protein belongs to the oxygen-dependent FAD-linked oxidoreductase family. The cofactor is FAD.

It is found in the vacuole lumen. It participates in mycotoxin biosynthesis; patulin biosynthesis. FAD-linked oxidoreductase; part of the gene cluster that mediates the biosynthesis of patulin, an acetate-derived tetraketide mycotoxin produced by several fungal species that shows antimicrobial properties against several bacteria. PatO acts with patJ in the vacuole to convert gentisyl alcohol to isoepoxydon. The pathway begins with the synthesis of 6-methylsalicylic acid by the polyketide synthase (PKS) patK via condensation of acetate and malonate units. The 6-methylsalicylic acid decarboxylase patG then catalyzes the decarboxylation of 6-methylsalicylic acid to yield m-cresol (also known as 3-methylphenol). These first reactions occur in the cytosol. The intermediate m-cresol is then transported into the endoplasmic reticulum where the cytochrome P450 monooxygenase patH converts it to m-hydroxybenzyl alcohol, which is further converted to gentisyl alcohol by the cytochrome P450 monooxygenase patI. The oxidoreductases patJ and patO further convert gentisyl alcohol to isoepoxydon in the vacuole. PatN catalyzes then the transformation of isoepoxydon into phyllostine. The cluster protein patF is responsible for the conversion from phyllostine to neopatulin whereas the alcohol dehydrogenase patD converts neopatulin to E-ascladiol. The steps between isoepoxydon and E-ascladiol occur in the cytosol, and E-ascladiol is probably secreted to the extracellular space by one of the cluster-specific transporters patC or patM. Finally, the secreted patulin synthase patE catalyzes the conversion of E-ascladiol to patulin. The protein is FAD-linked oxidoreductase patO of Aspergillus clavatus (strain ATCC 1007 / CBS 513.65 / DSM 816 / NCTC 3887 / NRRL 1 / QM 1276 / 107).